The sequence spans 571 residues: Proline--tRNA ligase (571 aa).

This sequence belongs to the class-II aminoacyl-tRNA synthetase family. ProS type 1 subfamily. As to quaternary structure, homodimer.

It localises to the cytoplasm. It carries out the reaction tRNA(Pro) + L-proline + ATP = L-prolyl-tRNA(Pro) + AMP + diphosphate. Functionally, catalyzes the attachment of proline to tRNA(Pro) in a two-step reaction: proline is first activated by ATP to form Pro-AMP and then transferred to the acceptor end of tRNA(Pro). As ProRS can inadvertently accommodate and process non-cognate amino acids such as alanine and cysteine, to avoid such errors it has two additional distinct editing activities against alanine. One activity is designated as 'pretransfer' editing and involves the tRNA(Pro)-independent hydrolysis of activated Ala-AMP. The other activity is designated 'posttransfer' editing and involves deacylation of mischarged Ala-tRNA(Pro). The misacylated Cys-tRNA(Pro) is not edited by ProRS. The polypeptide is Proline--tRNA ligase (Histophilus somni (strain 129Pt) (Haemophilus somnus)).